Consider the following 296-residue polypeptide: uncharacterized protein (296 aa).

In terms of domain architecture, FAD-binding FR-type spans 1–95 (MYKIVSKKEL…VGPLGVPSEF (95 aa)).

This is an uncharacterized protein from Clostridium beijerinckii (Clostridium MP).